We begin with the raw amino-acid sequence, 194 residues long: Fe/S biogenesis protein NfuA (194 aa).

C151 and C154 together coordinate [4Fe-4S] cluster.

It belongs to the NfuA family. Homodimer. The cofactor is [4Fe-4S] cluster.

Its function is as follows. Involved in iron-sulfur cluster biogenesis. Binds a 4Fe-4S cluster, can transfer this cluster to apoproteins, and thereby intervenes in the maturation of Fe/S proteins. Could also act as a scaffold/chaperone for damaged Fe/S proteins. The sequence is that of Fe/S biogenesis protein NfuA from Photobacterium profundum (strain SS9).